Here is a 387-residue protein sequence, read N- to C-terminus: Chaperone protein DnaJ (387 aa).

Residues 4–68 form the J domain; the sequence is DFYDVLGVSR…EKRQMYDQLG (65 aa). The interval 76 to 135 is disordered; the sequence is EKRGGVGGGGNSSGGSARGDPFGGMGGQGSPFGDIFEQFFGGGQGQRRQGNRPRQGQNLQ. Gly residues predominate over residues 80-105; the sequence is GVGGGGNSSGGSARGDPFGGMGGQGS. Residues 121 to 133 show a composition bias toward low complexity; sequence QRRQGNRPRQGQN. The CR-type zinc-finger motif lies at 148–230; sequence GVEKQFTVRR…CNGDGVTRQE (83 aa). The Zn(2+) site is built by cysteine 161, cysteine 164, cysteine 178, cysteine 181, cysteine 204, cysteine 207, cysteine 218, and cysteine 221. 4 CXXCXGXG motif repeats span residues 161–168, 178–185, 204–211, and 218–225; these read CPDCNGRG, CPQCNGQG, CPRCDGSG, and CSTCNGDG.

The protein belongs to the DnaJ family. As to quaternary structure, homodimer. Zn(2+) serves as cofactor.

It localises to the cytoplasm. Participates actively in the response to hyperosmotic and heat shock by preventing the aggregation of stress-denatured proteins and by disaggregating proteins, also in an autonomous, DnaK-independent fashion. Unfolded proteins bind initially to DnaJ; upon interaction with the DnaJ-bound protein, DnaK hydrolyzes its bound ATP, resulting in the formation of a stable complex. GrpE releases ADP from DnaK; ATP binding to DnaK triggers the release of the substrate protein, thus completing the reaction cycle. Several rounds of ATP-dependent interactions between DnaJ, DnaK and GrpE are required for fully efficient folding. Also involved, together with DnaK and GrpE, in the DNA replication of plasmids through activation of initiation proteins. This is Chaperone protein DnaJ from Haloquadratum walsbyi (strain DSM 16790 / HBSQ001).